Reading from the N-terminus, the 83-residue chain is Translational regulator CsrA (83 aa).

Belongs to the CsrA/RsmA family. In terms of assembly, homodimer; the beta-strands of each monomer intercalate to form a hydrophobic core, while the alpha-helices form wings that extend away from the core.

It is found in the cytoplasm. In terms of biological role, a translational regulator that binds mRNA to regulate translation initiation and/or mRNA stability. Usually binds in the 5'-UTR at or near the Shine-Dalgarno sequence preventing ribosome-binding, thus repressing translation. Its main target seems to be the major flagellin gene, while its function is anatagonized by FliW. In Thermotoga petrophila (strain ATCC BAA-488 / DSM 13995 / JCM 10881 / RKU-1), this protein is Translational regulator CsrA.